A 299-amino-acid polypeptide reads, in one-letter code: NAD kinase (299 aa).

Catalysis depends on Asp71, which acts as the Proton acceptor. NAD(+) is bound by residues 71-72 (DG), 145-146 (ND), Arg173, Asp175, 186-191 (TAYSLS), Ala210, and Gln248.

Belongs to the NAD kinase family. A divalent metal cation is required as a cofactor.

Its subcellular location is the cytoplasm. It carries out the reaction NAD(+) + ATP = ADP + NADP(+) + H(+). Involved in the regulation of the intracellular balance of NAD and NADP, and is a key enzyme in the biosynthesis of NADP. Catalyzes specifically the phosphorylation on 2'-hydroxyl of the adenosine moiety of NAD to yield NADP. This Bordetella bronchiseptica (strain ATCC BAA-588 / NCTC 13252 / RB50) (Alcaligenes bronchisepticus) protein is NAD kinase.